We begin with the raw amino-acid sequence, 73 residues long: U3-agatoxin-Ao1k (73 aa).

Positions 1 to 20 (MRTIISLLLLSAMVFAVIEA) are cleaved as a signal peptide. A propeptide spanning residues 21–34 (ISLEEGLQLFEGER) is cleaved from the precursor. Intrachain disulfides connect C36–C52, C43–C57, C51–C67, and C59–C65. Residue S71 is modified to Serine amide.

Belongs to the neurotoxin 07 (Beta/delta-agtx) family. 03 (aga-4) subfamily. Aga sub-subfamily. In terms of tissue distribution, expressed by the venom gland.

Its subcellular location is the secreted. Its function is as follows. Insecticidal neurotoxin that modulates the insect Nav channel (DmNaV1/tipE (para/tipE)) in a unique manner, with both the activation and inactivation processes being affected. The voltage dependence of activation is shifted toward more hyperpolarized potentials (analogous to site 4 toxins) and a non-inactivating persistent sodium current is induced (site 3-like action). Interestingly, both effects take place in a voltage-dependent manner, producing a bell-shaped curve between -80 and 0 mV. Compared to beta/delta-agatoxin-1 to -3, this toxin appears to affect the insect sodium channel only weakly. This is U3-agatoxin-Ao1k from Agelena orientalis (Funnel-web spider).